The chain runs to 325 residues: DNA-directed RNA polymerase subunit alpha (325 aa).

The interval 1 to 231 (MQNSLLKPRI…DQLNVFAALE (231 aa)) is alpha N-terminal domain (alpha-NTD). The alpha C-terminal domain (alpha-CTD) stretch occupies residues 246–325 (VDPILLRPVD…ENWPPAGLEK (80 aa)).

This sequence belongs to the RNA polymerase alpha chain family. Homodimer. The RNAP catalytic core consists of 2 alpha, 1 beta, 1 beta' and 1 omega subunit. When a sigma factor is associated with the core the holoenzyme is formed, which can initiate transcription.

It carries out the reaction RNA(n) + a ribonucleoside 5'-triphosphate = RNA(n+1) + diphosphate. Its function is as follows. DNA-dependent RNA polymerase catalyzes the transcription of DNA into RNA using the four ribonucleoside triphosphates as substrates. The protein is DNA-directed RNA polymerase subunit alpha of Herminiimonas arsenicoxydans.